Consider the following 201-residue polypeptide: Large ribosomal subunit protein uL4 (201 aa).

Residues Ala-45–Gly-71 are disordered.

It belongs to the universal ribosomal protein uL4 family. In terms of assembly, part of the 50S ribosomal subunit.

In terms of biological role, one of the primary rRNA binding proteins, this protein initially binds near the 5'-end of the 23S rRNA. It is important during the early stages of 50S assembly. It makes multiple contacts with different domains of the 23S rRNA in the assembled 50S subunit and ribosome. Its function is as follows. Forms part of the polypeptide exit tunnel. The chain is Large ribosomal subunit protein uL4 from Shewanella halifaxensis (strain HAW-EB4).